We begin with the raw amino-acid sequence, 306 residues long: Leucine-rich repeat-containing protein 59 (306 aa).

Methionine 1 bears the N-acetylmethionine mark. An N-acetylthreonine; in Leucine-rich repeat-containing protein 59, N-terminally processed modification is found at threonine 2. The Cytoplasmic segment spans residues 2 to 244 (TKAGSKGGNL…KPPPRKHTRS (243 aa)). LRR repeat units lie at residues 10 to 31 (NLRDKLDGNELDLSLSDLNEVP), 40 to 62 (KATVLDLSCNKLTTLPSDFCGLT), 63 to 84 (HLVKLDLSKNKLRQLPADFGRL), 86 to 107 (NLQHLDLLNNRLVTLPVSFAQL), and 109 to 128 (SLKWLDLKDNPLDPVLAKVA). Residues serine 23 and serine 25 each carry the phosphoserine modification. Lysine 73 bears the N6-succinyllysine mark. An N6-acetyllysine modification is found at lysine 135. The stretch at 152-216 (QADQERERQR…KAAKREQEKK (65 aa)) forms a coiled coil. The segment covering 175–221 (AKQRAKEAQERELRKREKAEEKERRRKEYDALKAAKREQEKKPKKET) has biased composition (basic and acidic residues). The disordered stretch occupies residues 175–241 (AKQRAKEAQE…RPRKPPPRKH (67 aa)). Basic residues predominate over residues 229 to 241 (SSSRPRKPPPRKH). The helical transmembrane segment at 245 to 265 (WAVLKLLLLLLLCVAGGLVAC) threads the bilayer. The Lumenal portion of the chain corresponds to 266–306 (RVTELQQQPLCTSVNTIYDNAVRGLRSHDILQWVLQTDSQQ).

In terms of assembly, can form homodimers. Interacts with SGO1. Interacts with FGF1.

It localises to the microsome membrane. The protein localises to the endoplasmic reticulum membrane. It is found in the nucleus envelope. In terms of biological role, required for nuclear import of FGF1, but not that of FGF2. Might regulate nuclear import of exogenous FGF1 by facilitating interaction with the nuclear import machinery and by transporting cytosolic FGF1 to, and possibly through, the nuclear pores. In Bos taurus (Bovine), this protein is Leucine-rich repeat-containing protein 59 (LRRC59).